We begin with the raw amino-acid sequence, 222 residues long: Ras-related protein RabT1 (222 aa).

37–44 is a GTP binding site; that stretch reads GDNKTGKS. An Effector region motif is present at residues 59 to 66; that stretch reads VSSIGVDF. Residues 85–89 and 145–148 contribute to the GTP site; these read DVNSC and NKCD. A Cysteine methyl ester modification is found at cysteine 219. The S-geranylgeranyl cysteine moiety is linked to residue cysteine 219. Positions 220–222 are cleaved as a propeptide — removed in mature form; that stretch reads NIL.

This sequence belongs to the small GTPase superfamily. Rab family.

The protein localises to the cell membrane. The sequence is that of Ras-related protein RabT1 (rabT1) from Dictyostelium discoideum (Social amoeba).